Consider the following 437-residue polypeptide: Enolase (437 aa).

Position 162 (Q162) interacts with (2R)-2-phosphoglycerate. E204 serves as the catalytic Proton donor. Mg(2+)-binding residues include D251, E297, and D324. (2R)-2-phosphoglycerate is bound by residues K349, R378, S379, and K400. K349 acts as the Proton acceptor in catalysis.

The protein belongs to the enolase family. Mg(2+) serves as cofactor.

The protein localises to the cytoplasm. It is found in the secreted. The protein resides in the cell surface. It carries out the reaction (2R)-2-phosphoglycerate = phosphoenolpyruvate + H2O. It participates in carbohydrate degradation; glycolysis; pyruvate from D-glyceraldehyde 3-phosphate: step 4/5. Its function is as follows. Catalyzes the reversible conversion of 2-phosphoglycerate (2-PG) into phosphoenolpyruvate (PEP). It is essential for the degradation of carbohydrates via glycolysis. The sequence is that of Enolase from Chlorobaculum parvum (strain DSM 263 / NCIMB 8327) (Chlorobium vibrioforme subsp. thiosulfatophilum).